Consider the following 325-residue polypeptide: Sulfite dehydrogenase subunit C (325 aa).

The next 8 membrane-spanning stretches (helical) occupy residues 5–25 (FSVIFLTTLLGAGQGLYLAMV), 43–63 (FYAVGSLVALLLLIAGLGASF), 87–107 (EVIVLPIVMALVFAYGVAHWF), 126–146 (LLLGVLGTIASLALFVCTAMI), 165–185 (FLFLGAASGFMLAAAYSAYIG), 186–206 (NPLVTFYGTWAVILTLVGLAS), 266–286 (VYLVLVFPIPVLLIGLSYLIG), and 290–310 (LPIIAFFVQFAGLLIERWSFF).

Belongs to the DmsC family. As to quaternary structure, forms a heterotrimeric membrane-bound complex composed of a catalytic heterodimer (SoeAB) and a membrane anchor protein (SoeC).

The protein resides in the cell inner membrane. In terms of biological role, part of the SoeABC complex that catalyzes the oxidation of sulfite to sulfate. SoeC probably anchors and stabilizes the catalytic subunits. This Allochromatium vinosum (strain ATCC 17899 / DSM 180 / NBRC 103801 / NCIMB 10441 / D) (Chromatium vinosum) protein is Sulfite dehydrogenase subunit C.